We begin with the raw amino-acid sequence, 174 residues long: UPF0113 protein APE_0516.1 (174 aa).

It belongs to the UPF0113 family.

This Aeropyrum pernix (strain ATCC 700893 / DSM 11879 / JCM 9820 / NBRC 100138 / K1) protein is UPF0113 protein APE_0516.1.